The following is a 153-amino-acid chain: Deoxyuridine 5'-triphosphate nucleotidohydrolase (153 aa).

8 residues coordinate dUMP: serine 75, glycine 88, aspartate 91, tyrosine 94, lysine 99, arginine 143, phenylalanine 148, and glycine 149.

It belongs to the dUTPase family. As to quaternary structure, homotrimer. The cofactor is Mg(2+).

It catalyses the reaction dUTP + H2O = dUMP + diphosphate + H(+). It functions in the pathway pyrimidine metabolism; dUMP biosynthesis; dUMP from dCTP (dUTP route): step 2/2. Involved in nucleotide metabolism via production of dUMP, the immediate precursor of thymidine nucleotides, and decreases the intracellular concentration of dUTP so that uracil cannot be incorporated into DNA. This chain is Deoxyuridine 5'-triphosphate nucleotidohydrolase (DUT1), found in Eremothecium gossypii (strain ATCC 10895 / CBS 109.51 / FGSC 9923 / NRRL Y-1056) (Yeast).